A 309-amino-acid chain; its full sequence is Aromatic prenyltransferase (309 aa).

This sequence belongs to the aromatic prenyltransferase family.

In terms of biological role, prenyltransferase that attaches isoprenoid moieties to carbon atoms of aromatic substrates in an enzyme-catalyzed Friedel-Crafts reaction. Shows specificity for dimethylallyl diphosphate (DMAPP) and does not accept geranyl diphosphate (GPP) or isopentenyl diphosphate (IPP). Prenylates the artificial substrate 2,7-dihydroxynaphthalene (2,7-DHN), as well as dihydrophenazine-1-carboxylic acid and 4-hydroxybenzoic acid at lower levels. Only traces of products are detected with aspulvinone E or flaviolin as substrates; and no product is formed with L-tryptophan, L-tyrosine, or 4-hydroxyphenylpyruvate. Ptf seems no to be involved in the prenylation reaction in the biosynthesis of aspulvinone H and J and the physiological function of ptf remains unknown. This chain is Aromatic prenyltransferase, found in Botryotinia fuckeliana (strain B05.10) (Noble rot fungus).